We begin with the raw amino-acid sequence, 435 residues long: 4-hydroxy-3-methylbut-2-en-1-yl diphosphate synthase (flavodoxin) (435 aa).

The segment covering 1 to 15 has biased composition (basic and acidic residues); sequence MTDVDLRARPQEGMK. The tract at residues 1–24 is disordered; that stretch reads MTDVDLRARPQEGMKEIPAGPKGR. [4Fe-4S] cluster contacts are provided by Cys316, Cys319, Cys362, and Glu369.

This sequence belongs to the IspG family. [4Fe-4S] cluster is required as a cofactor.

It carries out the reaction (2E)-4-hydroxy-3-methylbut-2-enyl diphosphate + oxidized [flavodoxin] + H2O + 2 H(+) = 2-C-methyl-D-erythritol 2,4-cyclic diphosphate + reduced [flavodoxin]. Its pathway is isoprenoid biosynthesis; isopentenyl diphosphate biosynthesis via DXP pathway; isopentenyl diphosphate from 1-deoxy-D-xylulose 5-phosphate: step 5/6. Functionally, converts 2C-methyl-D-erythritol 2,4-cyclodiphosphate (ME-2,4cPP) into 1-hydroxy-2-methyl-2-(E)-butenyl 4-diphosphate. In Afipia carboxidovorans (strain ATCC 49405 / DSM 1227 / KCTC 32145 / OM5) (Oligotropha carboxidovorans), this protein is 4-hydroxy-3-methylbut-2-en-1-yl diphosphate synthase (flavodoxin).